A 473-amino-acid chain; its full sequence is Photosystem II CP43 reaction center protein (473 aa).

A propeptide spanning residues 1 to 14 is cleaved from the precursor; it reads MKILYSPRRFYPVE. Thr-15 is modified (N-acetylthreonine). At Thr-15 the chain carries Phosphothreonine. 5 consecutive transmembrane segments (helical) span residues 69-93, 134-155, 178-200, 255-275, and 291-312; these read LFEV…PHLA, LIGP…KDKN, KALY…REIT, KPFA…LSYS, and WFNN…ASQA. Glu-367 lines the [CaMn4O5] cluster pocket. A helical transmembrane segment spans residues 447–471; the sequence is RARAAAAGFEKGIDRDTEPVLSMTP.

Belongs to the PsbB/PsbC family. PsbC subfamily. As to quaternary structure, PSII is composed of 1 copy each of membrane proteins PsbA, PsbB, PsbC, PsbD, PsbE, PsbF, PsbH, PsbI, PsbJ, PsbK, PsbL, PsbM, PsbT, PsbX, PsbY, PsbZ, Psb30/Ycf12, at least 3 peripheral proteins of the oxygen-evolving complex and a large number of cofactors. It forms dimeric complexes. Binds multiple chlorophylls and provides some of the ligands for the Ca-4Mn-5O cluster of the oxygen-evolving complex. It may also provide a ligand for a Cl- that is required for oxygen evolution. PSII binds additional chlorophylls, carotenoids and specific lipids. is required as a cofactor.

It localises to the plastid. The protein resides in the chloroplast thylakoid membrane. Its function is as follows. One of the components of the core complex of photosystem II (PSII). It binds chlorophyll and helps catalyze the primary light-induced photochemical processes of PSII. PSII is a light-driven water:plastoquinone oxidoreductase, using light energy to abstract electrons from H(2)O, generating O(2) and a proton gradient subsequently used for ATP formation. This chain is Photosystem II CP43 reaction center protein, found in Adiantum capillus-veneris (Maidenhair fern).